Here is a 585-residue protein sequence, read N- to C-terminus: uncharacterized protein (585 aa).

To E.coli YejM.

This is an uncharacterized protein from Haemophilus influenzae (strain ATCC 51907 / DSM 11121 / KW20 / Rd).